A 1227-amino-acid polypeptide reads, in one-letter code: DNA-directed RNA polymerase subunit beta (1227 aa).

The protein belongs to the RNA polymerase beta chain family. In terms of assembly, the RNAP catalytic core consists of 2 alpha, 1 beta, 1 beta' and 1 omega subunit. When a sigma factor is associated with the core the holoenzyme is formed, which can initiate transcription.

The catalysed reaction is RNA(n) + a ribonucleoside 5'-triphosphate = RNA(n+1) + diphosphate. Its function is as follows. DNA-dependent RNA polymerase catalyzes the transcription of DNA into RNA using the four ribonucleoside triphosphates as substrates. The sequence is that of DNA-directed RNA polymerase subunit beta from Chloroflexus aurantiacus (strain ATCC 29366 / DSM 635 / J-10-fl).